Reading from the N-terminus, the 137-residue chain is Proofreading thioesterase EntH (137 aa).

Glu-63 (nucleophile or proton acceptor) is an active-site residue.

It belongs to the thioesterase PaaI family. Homotetramer. Dimer of dimers. Interacts specifically with the aryl carrier protein (ArCP) domain of EntB.

Its subcellular location is the cytoplasm. It participates in siderophore biosynthesis; enterobactin biosynthesis. In terms of biological role, required for optimal enterobactin synthesis. Acts as a proofreading enzyme that prevents EntB misacylation by hydrolyzing the thioester bound existing between EntB and wrongly charged molecules. This chain is Proofreading thioesterase EntH, found in Escherichia coli O157:H7 (strain EC4115 / EHEC).